We begin with the raw amino-acid sequence, 436 residues long: UPF0597 protein YhaM (436 aa).

This sequence belongs to the UPF0597 family.

The protein is UPF0597 protein YhaM of Shigella dysenteriae serotype 1 (strain Sd197).